The primary structure comprises 849 residues: Leucine--tRNA ligase (849 aa).

Positions 44-54 (PYPSGRIHMGH) match the 'HIGH' region motif. A 'KMSKS' region motif is present at residues 620-624 (KMSKS). Lys-623 contributes to the ATP binding site.

It belongs to the class-I aminoacyl-tRNA synthetase family.

It localises to the cytoplasm. It catalyses the reaction tRNA(Leu) + L-leucine + ATP = L-leucyl-tRNA(Leu) + AMP + diphosphate. In Sphingopyxis alaskensis (strain DSM 13593 / LMG 18877 / RB2256) (Sphingomonas alaskensis), this protein is Leucine--tRNA ligase.